The chain runs to 115 residues: NAD(P)H-quinone oxidoreductase subunit M (115 aa).

Belongs to the complex I NdhM subunit family. NDH-1 can be composed of about 15 different subunits; different subcomplexes with different compositions have been identified which probably have different functions.

The protein localises to the cellular thylakoid membrane. It catalyses the reaction a plastoquinone + NADH + (n+1) H(+)(in) = a plastoquinol + NAD(+) + n H(+)(out). The enzyme catalyses a plastoquinone + NADPH + (n+1) H(+)(in) = a plastoquinol + NADP(+) + n H(+)(out). Functionally, NDH-1 shuttles electrons from an unknown electron donor, via FMN and iron-sulfur (Fe-S) centers, to quinones in the respiratory and/or the photosynthetic chain. The immediate electron acceptor for the enzyme in this species is believed to be plastoquinone. Couples the redox reaction to proton translocation, and thus conserves the redox energy in a proton gradient. Cyanobacterial NDH-1 also plays a role in inorganic carbon-concentration. This is NAD(P)H-quinone oxidoreductase subunit M from Prochlorococcus marinus (strain NATL2A).